The primary structure comprises 370 residues: NSFL1 cofactor p47 (370 aa).

Polar residues predominate over residues 54–73 (SQATPSSVSRGTAPSDNRVT). The segment at 54–116 (SQATPSSVSR…VGPPRKKSPN (63 aa)) is disordered. Phosphoserine is present on residues S74, S102, S114, and S140. The short motif at 109–115 (PPRKKSP) is the Nuclear localization signal element. Y167 is subject to Phosphotyrosine. Positions 172–175 (KRQH) match the Nuclear localization signal motif. A phosphoserine mark is found at S176, S192, and S272. One can recognise an SEP domain in the interval 179–244 (DVHVVLKLWK…MEDHRDEDFV (66 aa)). Residues 261–287 (GSTAPQVLSTSSPAQQAENEAKASSSI) are compositionally biased toward polar residues. A disordered region spans residues 261–289 (GSTAPQVLSTSSPAQQAENEAKASSSILI). One can recognise a UBX domain in the interval 291 to 368 (ESEPTTNIQI…NLLNAVIVQR (78 aa)).

This sequence belongs to the NSFL1C family. In terms of assembly, part of a ternary complex containing STX5A, NSFL1C and VCP. NSFL1C forms a homotrimer that binds to one end of a VCP homohexamer. The complex binds to membranes enriched in phosphatidylethanolamine-containing lipids and promotes Golgi membrane fusion. Interaction with VCIP135 leads to dissociation of the complex via ATP hydrolysis by VCP. Binds ubiquitin and mono-ubiquitinated proteins via its N-terminal UBA-like domain when bound to VCP. In terms of processing, phosphorylated during mitosis. Phosphorylation inhibits interaction with Golgi membranes and is required for the fragmentation of the Golgi stacks during mitosis.

It is found in the nucleus. The protein resides in the golgi apparatus. Its subcellular location is the golgi stack. It localises to the chromosome. The protein localises to the cytoplasm. It is found in the cytoskeleton. The protein resides in the microtubule organizing center. Its subcellular location is the centrosome. Functionally, reduces the ATPase activity of VCP. Necessary for the fragmentation of Golgi stacks during mitosis and for VCP-mediated reassembly of Golgi stacks after mitosis. May play a role in VCP-mediated formation of transitional endoplasmic reticulum (tER). Inhibits the activity of CTSL (in vitro). Together with UBXN2B/p37, regulates the centrosomal levels of kinase AURKA/Aurora A during mitotic progression by promoting AURKA removal from centrosomes in prophase. Also, regulates spindle orientation during mitosis. This chain is NSFL1 cofactor p47 (NSFL1C), found in Homo sapiens (Human).